The following is a 244-amino-acid chain: Probable 2-phosphosulfolactate phosphatase (244 aa).

Belongs to the ComB family. Requires Mg(2+) as cofactor.

It carries out the reaction (2R)-O-phospho-3-sulfolactate + H2O = (2R)-3-sulfolactate + phosphate. The sequence is that of Probable 2-phosphosulfolactate phosphatase from Cyanothece sp. (strain PCC 7425 / ATCC 29141).